The sequence spans 607 residues: UvrABC system protein C (607 aa).

Residues 14 to 93 (HKPGVYLMLD…IKKHKPRYNI (80 aa)) form the GIY-YIG domain. The region spanning 203-238 (RDLLAELKRQMLQASERLNFEQAGQFRDQIRALKTT) is the UVR domain.

It belongs to the UvrC family. As to quaternary structure, interacts with UvrB in an incision complex.

Its subcellular location is the cytoplasm. The UvrABC repair system catalyzes the recognition and processing of DNA lesions. UvrC both incises the 5' and 3' sides of the lesion. The N-terminal half is responsible for the 3' incision and the C-terminal half is responsible for the 5' incision. The chain is UvrABC system protein C from Desulfotalea psychrophila (strain LSv54 / DSM 12343).